A 329-amino-acid chain; its full sequence is Putative glucose-6-phosphate 1-epimerase (329 aa).

Low complexity predominate over residues 1–13; the sequence is MAAPAPAGAAASP. The interval 1 to 20 is disordered; it reads MAAPAPAGAAASPSPKPQLP. The substrate site is built by Arg82, Gln100, and Arg105. His183 is a catalytic residue. Asp228 contributes to the substrate binding site. The active site involves Glu287.

The protein belongs to the glucose-6-phosphate 1-epimerase family.

It catalyses the reaction alpha-D-glucose 6-phosphate = beta-D-glucose 6-phosphate. This is Putative glucose-6-phosphate 1-epimerase from Cenchrus ciliaris (Buffelgrass).